Here is a 246-residue protein sequence, read N- to C-terminus: Virulence plasmid protein pGP6-D (246 aa).

It belongs to the UPF0137 (pGP6-D) family.

The polypeptide is Virulence plasmid protein pGP6-D (Chlamydia muridarum (strain MoPn / Nigg)).